The following is a 135-amino-acid chain: Helix-loop-helix protein 2 (135 aa).

Positions 1 to 81 are disordered; that stretch reads MMLSPDQAAD…RRATAKYRSA (81 aa). Residues 10–21 show a composition bias toward basic and acidic residues; the sequence is DSDHPSSTHSDP. A compositionally biased stretch (basic residues) spans 68 to 81; that stretch reads KRRRRRATAKYRSA. Residues 77–129 form the bHLH domain; the sequence is KYRSAHATRERIRVEAFNLAFAELRKLLPTLPPDKKLSKIEILRLAICYISYL.

As to quaternary structure, homodimer. Interacts and may form heterodimers with STAT3. In terms of tissue distribution, expressed in developing neurons. Transiently expressed in the cerebellum during postnatal development, exclusively in the premigratory zone of the external granule layer where postmitotic neurons undergo initial stages of neuronal differentiation. Expression is not detected in mature neurons. Expressed in the anterior lobe of the adult pituitary.

It is found in the nucleus. In terms of biological role, transcription factor which binds the E box motif 5'-CA[TC][AG]TG-3'. Involved in regulating energy expenditure, body mass, voluntary physical activity, mating behavior and reproductive longevity, acting through the hypothalamic-pituitary-gonadal axis. Acts as a transcriptional activator of target genes, including Ndn, Pcsk1, Mc4r. Is also a transcriptional activator of KISS1. May act centrally to regulate function of both white and brown adipose tissue. Together with NHLH1, required to maintain migration and survival of cells in the anterior extramural migration stream (aes), which forms the precerebellar nuclei. Also, in concert with Nhlh1, may determine fate of gonadotropin releasing hormone-1 (GnRH-1) neurons. This is Helix-loop-helix protein 2 (Nhlh2) from Mus musculus (Mouse).